The following is a 123-amino-acid chain: Ribonuclease P protein component 2 (123 aa).

It belongs to the eukaryotic/archaeal RNase P protein component 2 family. In terms of assembly, consists of a catalytic RNA component and at least 4 protein subunits.

The catalysed reaction is Endonucleolytic cleavage of RNA, removing 5'-extranucleotides from tRNA precursor.. Its function is as follows. Part of ribonuclease P, a protein complex that generates mature tRNA molecules by cleaving their 5'-ends. The protein is Ribonuclease P protein component 2 of Aeropyrum pernix (strain ATCC 700893 / DSM 11879 / JCM 9820 / NBRC 100138 / K1).